Consider the following 246-residue polypeptide: Pyridoxine 5'-phosphate synthase (246 aa).

Asn-12 is a binding site for 3-amino-2-oxopropyl phosphate. 14 to 15 (DH) is a 1-deoxy-D-xylulose 5-phosphate binding site. Arg-23 contacts 3-amino-2-oxopropyl phosphate. The Proton acceptor role is filled by His-48. Residues Arg-50 and His-55 each contribute to the 1-deoxy-D-xylulose 5-phosphate site. Glu-75 acts as the Proton acceptor in catalysis. 1-deoxy-D-xylulose 5-phosphate is bound at residue Thr-105. Residue His-196 is the Proton donor of the active site. 3-amino-2-oxopropyl phosphate is bound by residues Gly-197 and 218 to 219 (GH).

It belongs to the PNP synthase family. Homooctamer; tetramer of dimers.

The protein resides in the cytoplasm. The catalysed reaction is 3-amino-2-oxopropyl phosphate + 1-deoxy-D-xylulose 5-phosphate = pyridoxine 5'-phosphate + phosphate + 2 H2O + H(+). The protein operates within cofactor biosynthesis; pyridoxine 5'-phosphate biosynthesis; pyridoxine 5'-phosphate from D-erythrose 4-phosphate: step 5/5. In terms of biological role, catalyzes the complicated ring closure reaction between the two acyclic compounds 1-deoxy-D-xylulose-5-phosphate (DXP) and 3-amino-2-oxopropyl phosphate (1-amino-acetone-3-phosphate or AAP) to form pyridoxine 5'-phosphate (PNP) and inorganic phosphate. The protein is Pyridoxine 5'-phosphate synthase of Pseudomonas savastanoi pv. phaseolicola (strain 1448A / Race 6) (Pseudomonas syringae pv. phaseolicola (strain 1448A / Race 6)).